A 457-amino-acid polypeptide reads, in one-letter code: MKQETAQNKKVHFISLGCPKNLVDSEIMAGTLMKDGYEVVGEADQADTVIVNTCGFIEDSKKESIQRILDMSDLKQEGKIKKVVVAGCLTQRYKDDLVEGLPEADLFVGSGEFQNIAKILKNSDEGEKQKTFFNLPTYLQEEATPRVNSQPGHRAYLKISEGCMKRCAFCAIPLIRGNLQSRSIDAIVAEAKLLVAGGVKELIIISHDFTDYGFDIRRKDPTRKESPVELLKALDQVEGLQWIRLMYLYPDGITQEMVQVIKNSTKIVKYFDMPLQHVNDQVLKSMNRKMTRDEIETALMNIREHLPEAVIRTQFIVGFPGETQEQFEELLNFVAEQQFDRVGCFKYSPEENTPGGRMENQIDEETKQYRHDALMEVQQNISREKHSDFVGKTLQVIVEGFSEETDLLLQGRFWGQAPDIDGVVLINDGQAQVGDMVKVHITDNMEYDLIGEIVVEN.

An MTTase N-terminal domain is found at 9 to 128; it reads KKVHFISLGC…ILKNSDEGEK (120 aa). Residues cysteine 18, cysteine 54, cysteine 88, cysteine 163, cysteine 167, and cysteine 170 each contribute to the [4Fe-4S] cluster site. The 236-residue stretch at 149–384 folds into the Radical SAM core domain; that stretch reads SQPGHRAYLK…MEVQQNISRE (236 aa). The TRAM domain occupies 387–455; that stretch reads SDFVGKTLQV…EYDLIGEIVV (69 aa).

This sequence belongs to the methylthiotransferase family. RimO subfamily. It depends on [4Fe-4S] cluster as a cofactor.

It is found in the cytoplasm. The catalysed reaction is L-aspartate(89)-[ribosomal protein uS12]-hydrogen + (sulfur carrier)-SH + AH2 + 2 S-adenosyl-L-methionine = 3-methylsulfanyl-L-aspartate(89)-[ribosomal protein uS12]-hydrogen + (sulfur carrier)-H + 5'-deoxyadenosine + L-methionine + A + S-adenosyl-L-homocysteine + 2 H(+). Catalyzes the methylthiolation of an aspartic acid residue of ribosomal protein uS12. The chain is Ribosomal protein uS12 methylthiotransferase RimO from Bdellovibrio bacteriovorus (strain ATCC 15356 / DSM 50701 / NCIMB 9529 / HD100).